Here is a 315-residue protein sequence, read N- to C-terminus: MTRLPILLLLISLVYATPFPQTSKKIGDDATLSCNRNNTNDYVVMSAWYKEPNSIILLAAKSDVLYFDNYTKDKISYDSPYDDLVTTITIKSLTARDAGTYVCAFFMTSPTNDTDKVDYEEYSTELIVNTDSESTIDIILSGSTHSPETSSEKPDYIDNSNCSSVFEIATPEPITDNVEDHTDTVTYTSDSINTVSASSGESTTDETPEPITDKEEDHTVTDTVSYTTVSTSSGIVTTKSTTDDADLYDTYNDNDTVPSTTVGGSTTSISNYKTKDFVEIFGITALIILSAVAIFCITYYIYNKRSRKYKTENKV.

The first 16 residues, 1–16, serve as a signal peptide directing secretion; the sequence is MTRLPILLLLISLVYA. Residues 17–121 enclose the Ig-like V-type domain; it reads TPFPQTSKKI…NDTDKVDYEE (105 aa). Residues 17-279 lie on the Virion surface side of the membrane; that stretch reads TPFPQTSKKI…SNYKTKDFVE (263 aa). A disulfide bond links C34 and C103. Residues N37, N69, N112, and N161 are each glycosylated (N-linked (GlcNAc...) asparagine; by host). Positions 191–202 are enriched in polar residues; the sequence is SINTVSASSGES. The interval 191–213 is disordered; that stretch reads SINTVSASSGESTTDETPEPITD. The N-linked (GlcNAc...) asparagine; by host glycan is linked to N254. A helical transmembrane segment spans residues 280 to 303; that stretch reads IFGITALIILSAVAIFCITYYIYN. Topologically, residues 304–315 are intravirion; that stretch reads KRSRKYKTENKV.

Belongs to the orthopoxvirus OPG185 family. Heterodimerizes with OPG040. The heterodimer OPG185-OPG040 interacts with components of the entry fusion complex OPG143 and OPG094. Heterodimer with C3/VPC protein; disulfide-linked. Glycosylated; contains phosphate and sulfate-substituted glycans. O-glycosylation is required for hemagglutination and hemadsorption activities of infected cell membranes.

Its subcellular location is the virion membrane. The protein localises to the host membrane. Functionally, prevents cell to cell fusion by interacting with and directing the viral OPG040 protein on the host plasma membrane. The OPG185-OPG040 complex associates with components of the entry fusion complex (EFC) presumably to avoid superinfection and syncytium formation. Via its interaction with C3/VCP protein, protects the infected cell and probably also the extracellular enveloped virus from complement attack. The chain is Protein OPG185 (OPG185) from Homo sapiens (Human).